We begin with the raw amino-acid sequence, 144 residues long: D-aminoacyl-tRNA deacylase (144 aa).

Residues 136-137 carry the Gly-cisPro motif, important for rejection of L-amino acids motif; the sequence is GP.

It belongs to the DTD family. As to quaternary structure, homodimer.

The protein resides in the cytoplasm. It catalyses the reaction glycyl-tRNA(Ala) + H2O = tRNA(Ala) + glycine + H(+). It carries out the reaction a D-aminoacyl-tRNA + H2O = a tRNA + a D-alpha-amino acid + H(+). Its function is as follows. An aminoacyl-tRNA editing enzyme that deacylates mischarged D-aminoacyl-tRNAs. Also deacylates mischarged glycyl-tRNA(Ala), protecting cells against glycine mischarging by AlaRS. Acts via tRNA-based rather than protein-based catalysis; rejects L-amino acids rather than detecting D-amino acids in the active site. By recycling D-aminoacyl-tRNA to D-amino acids and free tRNA molecules, this enzyme counteracts the toxicity associated with the formation of D-aminoacyl-tRNA entities in vivo and helps enforce protein L-homochirality. The chain is D-aminoacyl-tRNA deacylase from Vibrio vulnificus (strain CMCP6).